We begin with the raw amino-acid sequence, 119 residues long: Small ribosomal subunit protein uS13 (119 aa).

Residues 94–113 (GLPVRGQRTKTNARTRKGPR) show a composition bias toward basic residues. The tract at residues 94-119 (GLPVRGQRTKTNARTRKGPRKAIGAK) is disordered.

Belongs to the universal ribosomal protein uS13 family. As to quaternary structure, part of the 30S ribosomal subunit. Forms a loose heterodimer with protein S19. Forms two bridges to the 50S subunit in the 70S ribosome.

Functionally, located at the top of the head of the 30S subunit, it contacts several helices of the 16S rRNA. In the 70S ribosome it contacts the 23S rRNA (bridge B1a) and protein L5 of the 50S subunit (bridge B1b), connecting the 2 subunits; these bridges are implicated in subunit movement. Contacts the tRNAs in the A and P-sites. This chain is Small ribosomal subunit protein uS13, found in Nitrosomonas europaea (strain ATCC 19718 / CIP 103999 / KCTC 2705 / NBRC 14298).